Consider the following 234-residue polypeptide: MGNIVAVIPAAGMGSRMGTEVKKQYLKLQDRPILAHTIDALEQVPDITGIVLVVSPGEETLCQELILKGNLFNKIMAVVPGGDHRQTSVYHGLCSLPGDTELVVIHDGARPLVQRAEISHIIKEARRVGAAALAVPVKDTVKLVNDQGYVIATPNREKLWAVQTPQVFNYELILKAHQDAREKGVYATDDCALVEALGQPVKLVQGSYENIKITTPEDMVMAQAFLKRRNCWCE.

This sequence belongs to the IspD/TarI cytidylyltransferase family. IspD subfamily.

It catalyses the reaction 2-C-methyl-D-erythritol 4-phosphate + CTP + H(+) = 4-CDP-2-C-methyl-D-erythritol + diphosphate. It participates in isoprenoid biosynthesis; isopentenyl diphosphate biosynthesis via DXP pathway; isopentenyl diphosphate from 1-deoxy-D-xylulose 5-phosphate: step 2/6. In terms of biological role, catalyzes the formation of 4-diphosphocytidyl-2-C-methyl-D-erythritol from CTP and 2-C-methyl-D-erythritol 4-phosphate (MEP). The protein is 2-C-methyl-D-erythritol 4-phosphate cytidylyltransferase of Desulforamulus reducens (strain ATCC BAA-1160 / DSM 100696 / MI-1) (Desulfotomaculum reducens).